The following is a 714-amino-acid chain: Probable metal-nicotianamine transporter YSL5 (714 aa).

The tract at residues histidine 17–aspartate 44 is disordered. Residues glutamate 27–phenylalanine 36 show a composition bias toward basic and acidic residues. Helical transmembrane passes span alanine 67–leucine 87, glycine 90–tryptophan 110, cysteine 135–methionine 155, leucine 175–proline 195, valine 236–glycine 256, isoleucine 295–isoleucine 315, valine 340–serine 360, isoleucine 413–leucine 433, isoleucine 445–leucine 465, leucine 477–leucine 497, phenylalanine 531–leucine 551, leucine 593–leucine 613, and phenylalanine 631–tryptophan 651.

Belongs to the YSL (TC 2.A.67.2) family.

It is found in the membrane. May be involved in the transport of nicotianamine-chelated metals. This Arabidopsis thaliana (Mouse-ear cress) protein is Probable metal-nicotianamine transporter YSL5 (YSL5).